The sequence spans 711 residues: Polyribonucleotide nucleotidyltransferase (711 aa).

Mg(2+)-binding residues include aspartate 486 and aspartate 492. In terms of domain architecture, KH spans 553–612 (PRIHTIKINPDKIKDVIGKGGSVIRALTEETGTTIEIEDDGTVKIAATDGEKAKHAIRRI). The S1 motif domain maps to 622 to 690 (GRVYTGKVTR…RQGRIRLSIK (69 aa)). The tract at residues 689 to 711 (IKEATEQSQPAAAPEAPAAEQGE) is disordered. Residues 694–711 (EQSQPAAAPEAPAAEQGE) show a composition bias toward low complexity.

The protein belongs to the polyribonucleotide nucleotidyltransferase family. In terms of assembly, component of the RNA degradosome, which is a multiprotein complex involved in RNA processing and mRNA degradation. Mg(2+) is required as a cofactor.

The protein resides in the cytoplasm. It catalyses the reaction RNA(n+1) + phosphate = RNA(n) + a ribonucleoside 5'-diphosphate. Its function is as follows. Involved in mRNA degradation. Catalyzes the phosphorolysis of single-stranded polyribonucleotides processively in the 3'- to 5'-direction. The protein is Polyribonucleotide nucleotidyltransferase of Shigella boydii serotype 4 (strain Sb227).